The following is a 283-amino-acid chain: Glutamate racemase (283 aa).

Substrate contacts are provided by residues 28 to 29 and 60 to 61; these read DS and YG. Cysteine 92 serves as the catalytic Proton donor/acceptor. Position 93-94 (93-94) interacts with substrate; that stretch reads NT. The Proton donor/acceptor role is filled by cysteine 204. Residue 205–206 coordinates substrate; that stretch reads TH.

It belongs to the aspartate/glutamate racemases family.

The catalysed reaction is L-glutamate = D-glutamate. The protein operates within cell wall biogenesis; peptidoglycan biosynthesis. Its function is as follows. Provides the (R)-glutamate required for cell wall biosynthesis. The sequence is that of Glutamate racemase from Salmonella enteritidis PT4 (strain P125109).